We begin with the raw amino-acid sequence, 957 residues long: Glutamyl aminopeptidase (957 aa).

Residues 1–18 (MNFAEREGSKRYCIQTKH) are Cytoplasmic-facing. A helical; Signal-anchor for type II membrane protein membrane pass occupies residues 19 to 39 (VAILCAVVVGVGLIVGLAVGL). Over 40–957 (TRSCDSSGDG…EWFFNLLESG (918 aa)) the chain is Extracellular. A disordered region spans residues 44–83 (DSSGDGGPGTAPAPSHLPSSTASPSGPPAQDQDICPASED). A glycan (N-linked (GlcNAc...) asparagine; atypical) is linked at N98. 2 N-linked (GlcNAc...) asparagine glycosylation sites follow: N124 and N197. Position 223 (E223) interacts with substrate. Residues N324 and N340 are each glycosylated (N-linked (GlcNAc...) asparagine). 357–361 (GAMEN) provides a ligand contact to substrate. H393 serves as a coordination point for Zn(2+). E394 acts as the Proton acceptor in catalysis. Positions 397 and 416 each coordinate Zn(2+). 9 N-linked (GlcNAc...) asparagine glycosylation sites follow: N554, N589, N597, N607, N678, N763, N773, N801, and N828. R887 contributes to the substrate binding site.

It belongs to the peptidase M1 family. In terms of assembly, homodimer; disulfide-linked. The cofactor is Zn(2+). Expressed in choriocarcinoma cancer cell lines (at protein level). Expressed by epithelial cells of the proximal tubule cells and the glomerulus of the nephron. Also found in a variety of other tissues.

It is found in the cell membrane. The catalysed reaction is Release of N-terminal glutamate (and to a lesser extent aspartate) from a peptide.. With respect to regulation, substrate specificity is modulated by calcium which enhances the enzymatic activity for cleavage of acidic residues while reducing its activity with basic residues. Inhibited by aminopeptidase inhibitors amastatin and bestatin. In terms of biological role, regulates central hypertension through its calcium-modulated preference to cleave N-terminal acidic residues from peptides such as angiotensin II. The sequence is that of Glutamyl aminopeptidase (ENPEP) from Homo sapiens (Human).